Reading from the N-terminus, the 103-residue chain is Co-chaperonin GroES (103 aa).

Belongs to the GroES chaperonin family. As to quaternary structure, heptamer of 7 subunits arranged in a ring. Interacts with the chaperonin GroEL.

The protein resides in the cytoplasm. In terms of biological role, together with the chaperonin GroEL, plays an essential role in assisting protein folding. The GroEL-GroES system forms a nano-cage that allows encapsulation of the non-native substrate proteins and provides a physical environment optimized to promote and accelerate protein folding. GroES binds to the apical surface of the GroEL ring, thereby capping the opening of the GroEL channel. The sequence is that of Co-chaperonin GroES from Synechococcus sp. (strain CC9902).